The chain runs to 372 residues: Mevalonate 3,5-bisphosphate decarboxylase (372 aa).

It belongs to the mevalonate 3,5-bisphosphate decarboxylase family. As to quaternary structure, homodimer.

It catalyses the reaction (R)-3,5-bisphosphomevalonate + H(+) = isopentenyl phosphate + phosphate + CO2. It functions in the pathway isoprenoid biosynthesis; isopentenyl diphosphate biosynthesis via mevalonate pathway. Its function is as follows. Catalyzes the ATP-independent decarboxylation of (R)-mevalonate 3,5-bisphosphate to isopentenyl phosphate. Functions in an alternative mevalonate pathway, only present in extreme acidophiles of the Thermoplasmatales order, which passes through mevalonate 3-phosphate rather than mevalonate 5-phosphate. This is Mevalonate 3,5-bisphosphate decarboxylase from Thermoplasma volcanium (strain ATCC 51530 / DSM 4299 / JCM 9571 / NBRC 15438 / GSS1).